The sequence spans 345 residues: Anthranilate phosphoribosyltransferase (345 aa).

5-phospho-alpha-D-ribose 1-diphosphate contacts are provided by residues Gly-88, 91 to 92 (GD), Thr-96, 98 to 101 (NIST), 116 to 124 (KHGNRSASG), and Ser-128. Gly-88 provides a ligand contact to anthranilate. Ser-100 is a binding site for Mg(2+). Anthranilate is bound at residue Asn-119. Arg-174 is an anthranilate binding site. Mg(2+) is bound by residues Asp-233 and Glu-234.

Belongs to the anthranilate phosphoribosyltransferase family. As to quaternary structure, homodimer. Mg(2+) is required as a cofactor.

It catalyses the reaction N-(5-phospho-beta-D-ribosyl)anthranilate + diphosphate = 5-phospho-alpha-D-ribose 1-diphosphate + anthranilate. It functions in the pathway amino-acid biosynthesis; L-tryptophan biosynthesis; L-tryptophan from chorismate: step 2/5. Functionally, catalyzes the transfer of the phosphoribosyl group of 5-phosphorylribose-1-pyrophosphate (PRPP) to anthranilate to yield N-(5'-phosphoribosyl)-anthranilate (PRA). This is Anthranilate phosphoribosyltransferase from Prochlorococcus marinus (strain NATL2A).